The following is a 155-amino-acid chain: Protein-export protein SecB (155 aa).

It belongs to the SecB family. Homotetramer, a dimer of dimers. One homotetramer interacts with 1 SecA dimer.

It is found in the cytoplasm. Functionally, one of the proteins required for the normal export of preproteins out of the cell cytoplasm. It is a molecular chaperone that binds to a subset of precursor proteins, maintaining them in a translocation-competent state. It also specifically binds to its receptor SecA. This chain is Protein-export protein SecB, found in Methylococcus capsulatus (strain ATCC 33009 / NCIMB 11132 / Bath).